A 160-amino-acid polypeptide reads, in one-letter code: MNFEIEQILTQIIAFLIMLGVLKKFVWKRLLNLIEERKQLIQSEFDKIENQKEEVTKLSEEYKAKLHDIDAEARRRIQEAVVKGRDIAHDIEQETRQKVTSLLNNAQEEMKLELAQAKEQLKKDVINISFAITEKLIHEKVDISKHQKLVEEAVEQVEIR.

The chain crosses the membrane as a helical span at residues 5-27 (IEQILTQIIAFLIMLGVLKKFVW).

It belongs to the ATPase B chain family. As to quaternary structure, F-type ATPases have 2 components, F(1) - the catalytic core - and F(0) - the membrane proton channel. F(1) has five subunits: alpha(3), beta(3), gamma(1), delta(1), epsilon(1). F(0) has three main subunits: a(1), b(2) and c(10-14). The alpha and beta chains form an alternating ring which encloses part of the gamma chain. F(1) is attached to F(0) by a central stalk formed by the gamma and epsilon chains, while a peripheral stalk is formed by the delta and b chains.

It localises to the cell inner membrane. In terms of biological role, f(1)F(0) ATP synthase produces ATP from ADP in the presence of a proton or sodium gradient. F-type ATPases consist of two structural domains, F(1) containing the extramembraneous catalytic core and F(0) containing the membrane proton channel, linked together by a central stalk and a peripheral stalk. During catalysis, ATP synthesis in the catalytic domain of F(1) is coupled via a rotary mechanism of the central stalk subunits to proton translocation. Component of the F(0) channel, it forms part of the peripheral stalk, linking F(1) to F(0). The protein is ATP synthase subunit b of Protochlamydia amoebophila (strain UWE25).